A 115-amino-acid polypeptide reads, in one-letter code: MKFVLLFGVLVVTLFSYSSAEMLDDFDQADEDELLSLIEKEEARAKECTPRFYDCSHDRHSCCRSELFKDVCTCFYPEGGDNEVCTCQQPKHLKYMEKAAGKAKKFGGKIKKWFG.

A signal peptide spans 1-20 (MKFVLLFGVLVVTLFSYSSA). A propeptide spanning residues 21–44 (EMLDDFDQADEDELLSLIEKEEAR) is cleaved from the precursor. 4 cysteine pairs are disulfide-bonded: Cys48/Cys63, Cys55/Cys72, Cys62/Cys87, and Cys74/Cys85.

This sequence belongs to the neurotoxin 19 (CSTX) family. 01 subfamily. In terms of tissue distribution, expressed by the venom gland.

The protein resides in the secreted. The protein is U3-lycotoxin-Ls1k of Lycosa singoriensis (Wolf spider).